Consider the following 56-residue polypeptide: Ovomucoid (56 aa).

Positions 6–56 constitute a Kazal-like domain; that stretch reads VDCSEYPKPACTLEYRPLCGSDNKTYGNKCNFCNAVVESNGTLTLSHFGKC. Cystine bridges form between C8/C38, C16/C35, and C24/C56. N45 carries an N-linked (GlcNAc...) asparagine glycan.

It is found in the secreted. The polypeptide is Ovomucoid (Meleagris ocellata (Ocellated turkey)).